A 303-amino-acid chain; its full sequence is Nucleotide-binding protein Acry_0446 (303 aa).

10-17 (GLSGAGRN) contacts ATP. 54–57 (DART) contacts GTP.

This sequence belongs to the RapZ-like family.

Functionally, displays ATPase and GTPase activities. This chain is Nucleotide-binding protein Acry_0446, found in Acidiphilium cryptum (strain JF-5).